Consider the following 145-residue polypeptide: 3-hydroxyacyl-[acyl-carrier-protein] dehydratase FabZ (145 aa).

H48 is an active-site residue.

This sequence belongs to the thioester dehydratase family. FabZ subfamily.

It is found in the cytoplasm. The enzyme catalyses a (3R)-hydroxyacyl-[ACP] = a (2E)-enoyl-[ACP] + H2O. Its function is as follows. Involved in unsaturated fatty acids biosynthesis. Catalyzes the dehydration of short chain beta-hydroxyacyl-ACPs and long chain saturated and unsaturated beta-hydroxyacyl-ACPs. In Saccharophagus degradans (strain 2-40 / ATCC 43961 / DSM 17024), this protein is 3-hydroxyacyl-[acyl-carrier-protein] dehydratase FabZ.